Here is a 360-residue protein sequence, read N- to C-terminus: Peptide chain release factor 1 (360 aa).

An N5-methylglutamine modification is found at glutamine 235. The tract at residues 285–305 is disordered; the sequence is KRQEAEASERRNLLGSGDRSD.

It belongs to the prokaryotic/mitochondrial release factor family. Methylated by PrmC. Methylation increases the termination efficiency of RF1.

It localises to the cytoplasm. Peptide chain release factor 1 directs the termination of translation in response to the peptide chain termination codons UAG and UAA. The chain is Peptide chain release factor 1 from Proteus mirabilis (strain HI4320).